A 646-amino-acid polypeptide reads, in one-letter code: Threonine--tRNA ligase (646 aa).

Positions 1 to 61 (MIKITFPDGS…NEDASVVLYK (61 aa)) constitute a TGS domain. A catalytic region spans residues 242 to 541 (DHRKIGKEMQ…LIEHTAGKFP (300 aa)). Zn(2+) contacts are provided by cysteine 337, histidine 388, and histidine 518.

It belongs to the class-II aminoacyl-tRNA synthetase family. In terms of assembly, homodimer. Zn(2+) serves as cofactor.

It localises to the cytoplasm. The catalysed reaction is tRNA(Thr) + L-threonine + ATP = L-threonyl-tRNA(Thr) + AMP + diphosphate + H(+). Its function is as follows. Catalyzes the attachment of threonine to tRNA(Thr) in a two-step reaction: L-threonine is first activated by ATP to form Thr-AMP and then transferred to the acceptor end of tRNA(Thr). Also edits incorrectly charged L-seryl-tRNA(Thr). This is Threonine--tRNA ligase from Bacteroides fragilis (strain YCH46).